The chain runs to 354 residues: Probable L-ascorbate-6-phosphate lactonase UlaG (354 aa).

The protein belongs to the UlaG family. The cofactor is a divalent metal cation.

It is found in the cytoplasm. The enzyme catalyses L-ascorbate 6-phosphate + H2O = 3-dehydro-L-gulonate 6-phosphate. Its pathway is cofactor degradation; L-ascorbate degradation; D-xylulose 5-phosphate from L-ascorbate: step 1/4. In terms of biological role, probably catalyzes the hydrolysis of L-ascorbate-6-P into 3-keto-L-gulonate-6-P. Is essential for L-ascorbate utilization under anaerobic conditions. The chain is Probable L-ascorbate-6-phosphate lactonase UlaG from Salmonella agona (strain SL483).